The sequence spans 278 residues: Dermonecrotic toxin LspiSicTox-betaIE2i (278 aa).

Histidine 5 is an active-site residue. Positions 25 and 27 each coordinate Mg(2+). Histidine 41 serves as the catalytic Nucleophile. Intrachain disulfides connect cysteine 45/cysteine 51 and cysteine 47/cysteine 190. Glutamate 85 is a binding site for Mg(2+).

Belongs to the arthropod phospholipase D family. Class II subfamily. The cofactor is Mg(2+). Expressed by the venom gland.

The protein localises to the secreted. It carries out the reaction an N-(acyl)-sphingosylphosphocholine = an N-(acyl)-sphingosyl-1,3-cyclic phosphate + choline. It catalyses the reaction an N-(acyl)-sphingosylphosphoethanolamine = an N-(acyl)-sphingosyl-1,3-cyclic phosphate + ethanolamine. The catalysed reaction is a 1-acyl-sn-glycero-3-phosphocholine = a 1-acyl-sn-glycero-2,3-cyclic phosphate + choline. The enzyme catalyses a 1-acyl-sn-glycero-3-phosphoethanolamine = a 1-acyl-sn-glycero-2,3-cyclic phosphate + ethanolamine. Dermonecrotic toxins cleave the phosphodiester linkage between the phosphate and headgroup of certain phospholipids (sphingolipid and lysolipid substrates), forming an alcohol (often choline) and a cyclic phosphate. This toxin acts on sphingomyelin (SM). It may also act on ceramide phosphoethanolamine (CPE), lysophosphatidylcholine (LPC) and lysophosphatidylethanolamine (LPE), but not on lysophosphatidylserine (LPS), and lysophosphatidylglycerol (LPG). It acts by transphosphatidylation, releasing exclusively cyclic phosphate products as second products. Induces dermonecrosis, hemolysis, increased vascular permeability, edema, inflammatory response, and platelet aggregation. This Loxosceles spinulosa (Recluse spider) protein is Dermonecrotic toxin LspiSicTox-betaIE2i.